A 1896-amino-acid polypeptide reads, in one-letter code: Trinucleotide repeat-containing gene 6A protein (1896 aa).

2 stretches are compositionally biased toward basic and acidic residues: residues 1-21 (MRELEAKATKDVERNLSRDLV) and 39-57 (KKKEAAQKKATEQKIKVPE). Disordered regions lie at residues 1–137 (MREL…LLKR), 159–209 (SESS…DCST), 222–250 (EAWPSAPGSDPELAPECIDADSASNSESE), and 257–276 (ASGNTGGEKDGLRNSTGLGS). Residues 1 to 917 (MRELEAKATK…GDPPKCNQSL (917 aa)) form an interaction with argonaute family proteins region. Composition is skewed to low complexity over residues 69–93 (ANSDNGTSTATSTNNNAKRATASNQ) and 101–113 (QQPQQEQQQQQPQ). Over residues 125–137 (RFRHQEHKQLLKR) the composition is skewed to basic residues. Residues 239–488 (IDADSASNSE…QAPSVMNGTS (250 aa)) form a sufficient for interaction with AGO1, AGO3 and AGO4 region. 5 sufficient for interaction with AGO2 regions span residues 255–331 (VMAS…NAWG), 303–384 (GALI…STIG), 325–424 (NRMN…KVSF), 394–480 (SKVS…QIQA), and 487–736 (TSLS…NGTE). 2 stretches are compositionally biased toward polar residues: residues 396–410 (VSGSSTHGTWGSLQE) and 417–429 (SGTQKVSFSGQPQ). Disordered stretches follow at residues 396–461 (VSGS…NELP), 548–683 (FQVN…RRKI), 703–998 (LSNS…DPSK), 1011–1126 (IPEA…PTGW), and 1143–1182 (QELNSSLNWPPYTKKMSSKGLSGKKRRRERGMMKGGNKQE). Residues 430-443 (NITTETTGPNNTTN) show a composition bias toward low complexity. The span at 444 to 461 (FMTSSLPNSGSVQNNELP) shows a compositional bias: polar residues. Residues 551-1279 (NTNKGGGVWE…MFGVGNTAAQ (729 aa)) form a sufficient for interaction with AGO1 and AGO4 region. Positions 573 to 584 (SGNGANSGGSRR) are enriched in gly residues. 2 stretches are compositionally biased toward polar residues: residues 591–617 (QNTGTGLSSVEWNKLPSNQHSNDSANG) and 635–647 (GSATSQTNEQNSV). The segment covering 665–683 (GRLEEKVTGESQSRDRRKI) has biased composition (basic and acidic residues). Over residues 703-722 (LSNSGWGQTPIKQNTAWDTE) the composition is skewed to polar residues. Residues 723–733 (TSPRGERKTDN) show a composition bias toward basic and acidic residues. At Ser-724 the chain carries Phosphoserine. Polar residues predominate over residues 738–766 (WGSSATQTFNSGACTDKTSPNSNDTSSVS). The span at 858-871 (SSSGGSDSDRSISG) shows a compositional bias: low complexity. At Ser-863 the chain carries Phosphoserine. 2 stretches are compositionally biased toward polar residues: residues 876-906 (GKTSSFTWGNNINPNNSSGWDESSKPNSSQG) and 924-937 (KPVSSPDWNKQQDI). Ser-976 carries the phosphoserine modification. Polar residues-rich tracts occupy residues 1033-1042 (AVSSKETSSG), 1054-1064 (TPATTVDNGTS), and 1082-1105 (AASNASTWGSSSVGPQSLSKSGPK). The sufficient for interaction with AGO2 stretch occupies residues 1059 to 1129 (VDNGTSAWGK…GSRPTGWEEE (71 aa)). Positions 1143-1163 (QELNSSLNWPPYTKKMSSKGL) are enriched in low complexity. Residues Ser-1197 and Ser-1255 each carry the phosphoserine modification. 3 disordered regions span residues 1234–1256 (GDYNRTVGKGPGSRPQISKESSM), 1273–1306 (VGNTAAQPRGMQQPPAQPLSSSQPNLRAQVPPPL), and 1360–1395 (QRAQSQRSAPSANRQQQDQQGRPLSVQQQMMQQSRQ). 2 stretches are compositionally biased toward low complexity: residues 1284–1296 (QQPPAQPLSSSQP) and 1360–1376 (QRAQSQRSAPSANRQQQ). At Thr-1406 the chain carries Phosphothreonine. Disordered stretches follow at residues 1512 to 1570 (MNSS…VTPG) and 1659 to 1685 (PKNITAPSRPPPGLTGQKPPLSTWDNS). Ser-1520 is subject to Phosphoserine. A sufficient for interaction with AGO2 region spans residues 1605 to 1896 (TSAWSSIRAS…DHLGGGGESM (292 aa)). Residues 1716-1788 (NWLVLKNLTP…TTILAEFASE (73 aa)) enclose the RRM domain. Phosphoserine is present on residues Ser-1804 and Ser-1825.

The protein belongs to the GW182 family. As to quaternary structure, interacts with AGO2. Interacts with AGO1, AGO3 and AGO4. Interacts with CNOT1; the interaction is direct and mediates the association with the CCR4-NOT complex. Interacts with ZC3H12A. Interacts with SND1. Interacts with GARRE1.

Its subcellular location is the cytoplasm. The protein resides in the P-body. Its function is as follows. Plays a role in RNA-mediated gene silencing by both micro-RNAs (miRNAs) and short interfering RNAs (siRNAs). Required for miRNA-dependent repression of translation and for siRNA-dependent endonucleolytic cleavage of complementary mRNAs by argonaute family proteins. As a scaffolding protein, associates with argonaute proteins bound to partially complementary mRNAs, and can simultaneously recruit CCR4-NOT and PAN deadenylase complexes. In Mus musculus (Mouse), this protein is Trinucleotide repeat-containing gene 6A protein (Tnrc6a).